The following is a 400-amino-acid chain: 3-hydroxykynurenine transaminase (400 aa).

A binds to and confers specificity for 3-hydroxykynurenine; shared with dimeric partner region spans residues S43 to N44. Pyridoxal 5'-phosphate is bound by residues S77–H79, S154, and Q204. Substrate is bound at residue S154. K205 is subject to N6-(pyridoxal phosphate)lysine. Y256 and T259 together coordinate pyridoxal 5'-phosphate. R356 lines the substrate pocket.

Belongs to the class-V pyridoxal-phosphate-dependent aminotransferase family. Homodimer. May form homotetramer. Requires pyridoxal 5'-phosphate as cofactor.

The protein resides in the peroxisome. The enzyme catalyses glyoxylate + L-alanine = glycine + pyruvate. The catalysed reaction is L-kynurenine + glyoxylate = kynurenate + glycine + H2O. It catalyses the reaction 3-hydroxy-L-kynurenine + glyoxylate = xanthurenate + glycine + H2O. It carries out the reaction 3-hydroxy-L-kynurenine + pyruvate = xanthurenate + L-alanine + H2O. The enzyme catalyses L-kynurenine + pyruvate = kynurenate + L-alanine + H2O. The catalysed reaction is 2-oxobutanoate + L-alanine = (2S)-2-aminobutanoate + pyruvate. It catalyses the reaction L-phenylalanine + pyruvate = 3-phenylpyruvate + L-alanine. It carries out the reaction L-serine + pyruvate = 3-hydroxypyruvate + L-alanine. The enzyme catalyses L-cysteine + pyruvate = 2-oxo-3-sulfanylpropanoate + L-alanine. The catalysed reaction is 3-hydroxy-L-kynurenine + oxaloacetate = 4-(2-amino-3-hydroxyphenyl)-2,4-dioxobutanoate + L-aspartate. It catalyses the reaction 3-hydroxy-L-kynurenine + 3-phenylpyruvate = 4-(2-amino-3-hydroxyphenyl)-2,4-dioxobutanoate + L-phenylalanine. It carries out the reaction L-kynurenine + oxaloacetate = 4-(2-aminophenyl)-2,4-dioxobutanoate + L-aspartate. The enzyme catalyses 3-phenylpyruvate + L-kynurenine = 4-(2-aminophenyl)-2,4-dioxobutanoate + L-phenylalanine. Its pathway is amino-acid degradation; L-kynurenine degradation; kynurenate from L-kynurenine: step 1/2. Functionally, catalyzes the pyridoxal 5'-phosphate-dependent transamination of both 3-hydroxykynurenine and L-kynurenine to xanthurenic acid and kynurenic acid, respectively, preferentially using the alpha-ketoacid pyruvate, glyoxylate or oxaloacetate as the amino group acceptor. The affinity and catalytic efficiency for 3-hydroxykynurenine is higher than for L-kynurenine. Involved in the detoxification of cytotoxic metabolite 3-hydroxykynurenine generated by the hydroxylation of L-kynurenine, an intermediate in the tryptophan catabolism pathway. Also catalyzes, although with a lesser efficiency, the transamination of alanine with glyoxylate as an amino group acceptor. May play a role in the detoxification of glyoxylate, a toxic plant metabolite from the diet. The protein is 3-hydroxykynurenine transaminase of Aedes aegypti (Yellowfever mosquito).